A 316-amino-acid polypeptide reads, in one-letter code: Ribosomal RNA small subunit methyltransferase H (316 aa).

S-adenosyl-L-methionine contacts are provided by residues 35–37, D55, F84, D105, and Q112; that span reads AGH.

It belongs to the methyltransferase superfamily. RsmH family.

The protein localises to the cytoplasm. The catalysed reaction is cytidine(1402) in 16S rRNA + S-adenosyl-L-methionine = N(4)-methylcytidine(1402) in 16S rRNA + S-adenosyl-L-homocysteine + H(+). Functionally, specifically methylates the N4 position of cytidine in position 1402 (C1402) of 16S rRNA. This is Ribosomal RNA small subunit methyltransferase H from Streptococcus pneumoniae serotype 4 (strain ATCC BAA-334 / TIGR4).